Here is a 329-residue protein sequence, read N- to C-terminus: Malate dehydrogenase 2 (329 aa).

12-18 contributes to the NAD(+) binding site; that stretch reads GAAGQIA. Residues R93 and R99 each contribute to the substrate site. Residues N106, Q113, and 130–132 contribute to the NAD(+) site; that span reads VGN. The substrate site is built by N132 and R163. Catalysis depends on H188, which acts as the Proton acceptor.

It belongs to the LDH/MDH superfamily. MDH type 2 family.

The enzyme catalyses (S)-malate + NAD(+) = oxaloacetate + NADH + H(+). In terms of biological role, catalyzes the reversible oxidation of malate to oxaloacetate. The polypeptide is Malate dehydrogenase 2 (Burkholderia thailandensis (strain ATCC 700388 / DSM 13276 / CCUG 48851 / CIP 106301 / E264)).